The primary structure comprises 248 residues: Carbohydrate deacetylase (248 aa).

The Mg(2+) site is built by His-59 and His-121.

Belongs to the YdjC deacetylase family. Mg(2+) serves as cofactor.

Probably catalyzes the deacetylation of acetylated carbohydrates an important step in the degradation of oligosaccharides. This chain is Carbohydrate deacetylase, found in Brevibacillus brevis (strain 47 / JCM 6285 / NBRC 100599).